We begin with the raw amino-acid sequence, 391 residues long: Nicotinate phosphoribosyltransferase (391 aa).

Histidine 216 carries the post-translational modification Phosphohistidine; by autocatalysis.

Belongs to the NAPRTase family. Transiently phosphorylated on a His residue during the reaction cycle. Phosphorylation strongly increases the affinity for substrates and increases the rate of nicotinate D-ribonucleotide production. Dephosphorylation regenerates the low-affinity form of the enzyme, leading to product release.

It carries out the reaction nicotinate + 5-phospho-alpha-D-ribose 1-diphosphate + ATP + H2O = nicotinate beta-D-ribonucleotide + ADP + phosphate + diphosphate. The protein operates within cofactor biosynthesis; NAD(+) biosynthesis; nicotinate D-ribonucleotide from nicotinate: step 1/1. In terms of biological role, catalyzes the synthesis of beta-nicotinate D-ribonucleotide from nicotinate and 5-phospho-D-ribose 1-phosphate at the expense of ATP. This chain is Nicotinate phosphoribosyltransferase, found in Bordetella petrii (strain ATCC BAA-461 / DSM 12804 / CCUG 43448).